The chain runs to 450 residues: Crh-like protein 4 (450 aa).

Positions 1–21 are cleaved as a signal peptide; it reads MRLSLVGVAIGLLSSSAIVTA. An intrachain disulfide couples Cys-27 to Cys-34. Residues 46 to 228 form the GH16 domain; it reads YDFTKGSSPD…WAGGETDYSA (183 aa). Glu-119 functions as the Nucleophile in the catalytic mechanism. Catalysis depends on Glu-123, which acts as the Proton donor. Positions 123, 201, 205, and 216 each coordinate chitin. Asn-383 carries an N-linked (GlcNAc...) asparagine glycan.

Belongs to the glycosyl hydrolase 16 family. CRH1 subfamily. Post-translationally, the GPI-like anchor contains a phosphoceramide lipid group. The anchor position has not been determined.

It localises to the cell membrane. It is found in the secreted. Its subcellular location is the cell wall. It catalyses the reaction Random endo-hydrolysis of N-acetyl-beta-D-glucosaminide (1-&gt;4)-beta-linkages in chitin and chitodextrins.. Functionally, dual chitinase/transglycosylase that plays a role in cell wall architecture. Chitinase and transglycosylase activities are coupled. Required for the polysaccharide cross-linking at the septa and the cell wall. More specifically, transfers chitin to 1,6-beta-glucan in the cell wall. The sequence is that of Crh-like protein 4 from Aspergillus fumigatus (strain ATCC MYA-4609 / CBS 101355 / FGSC A1100 / Af293) (Neosartorya fumigata).